We begin with the raw amino-acid sequence, 152 residues long: Superoxide dismutase [Cu-Zn] (152 aa).

Residues His-45, His-47, and His-62 each coordinate Cu cation. The cysteines at positions 56 and 145 are disulfide-linked. Positions 62, 70, 79, and 82 each coordinate Zn(2+). Residue His-119 coordinates Cu cation.

Belongs to the Cu-Zn superoxide dismutase family. Homodimer. It depends on Cu cation as a cofactor. Zn(2+) serves as cofactor.

The protein localises to the cytoplasm. The enzyme catalyses 2 superoxide + 2 H(+) = H2O2 + O2. Destroys radicals which are normally produced within the cells and which are toxic to biological systems. The sequence is that of Superoxide dismutase [Cu-Zn] (SODCC) from Carica papaya (Papaya).